A 170-amino-acid polypeptide reads, in one-letter code: Photosystem I assembly protein Ycf3 (170 aa).

TPR repeat units lie at residues 35–68 (AFTYYRDGMLAQSEGNYAEALQNYYEAMRLEIDP), 72–105 (SYILYNIGLIHTSNGEHTKALEYYFRALERNPFL), and 120–153 (GEQAILQGDSEIAEAWFDQAAEYWKQAIALTPGN).

This sequence belongs to the Ycf3 family.

The protein resides in the plastid. The protein localises to the chloroplast thylakoid membrane. Functionally, essential for the assembly of the photosystem I (PSI) complex. May act as a chaperone-like factor to guide the assembly of the PSI subunits. This chain is Photosystem I assembly protein Ycf3, found in Oryza sativa (Rice).